The chain runs to 400 residues: Sphingosine 1-phosphate receptor 5 (400 aa).

At 1–41 the chain is on the extracellular side; the sequence is MEPGLLRPAPVSEVIVLHYNYTGKLRGARYQPGAGLRADAA. The N-linked (GlcNAc...) asparagine glycan is linked to Asn-20. A helical transmembrane segment spans residues 42-62; sequence VCLAVCAFIVLENLAVLLVLV. Residues 63-68 are Cytoplasmic-facing; that stretch reads RHPRFH. The chain crosses the membrane as a helical span at residues 69 to 89; that stretch reads APMFLLLGSLTLSDLLAGAAY. The Extracellular portion of the chain corresponds to 90–111; that stretch reads ATNILLSGPLTLRLSPALWFAR. The helical transmembrane segment at 112 to 132 threads the bilayer; sequence EGGVFVALAASVLSLLAIALE. Topologically, residues 133-151 are cytoplasmic; sequence RHLTMARRGPAPAASRART. The helical transmembrane segment at 152-172 threads the bilayer; it reads LAMAVAAWGASLLLGLLPALG. Residues 173–192 lie on the Extracellular side of the membrane; sequence WNCLGRLETCSTVLPLYAKA. The chain crosses the membrane as a helical span at residues 193-213; it reads YVLFCVLAFLGILAAICALYA. Over 214–253 the chain is Cytoplasmic; sequence RIYCQVRANARRLRAGPGSRRATSSSRSRHTPRSLALLRT. A helical transmembrane segment spans residues 254 to 274; that stretch reads LSVVLLAFVACWGPLFLLLLL. At 275–288 the chain is on the extracellular side; sequence DVACPARACPVLLQ. A helical transmembrane segment spans residues 289–309; the sequence is ADPFLGLAMANSLLNPIIYTF. At 310–400 the chain is on the cytoplasmic side; sequence TNRDLRHALL…NRSLVPTATD (91 aa). The S-palmitoyl cysteine moiety is linked to residue Cys-324. The tract at residues 331 to 400 is disordered; the sequence is QDSSNSLQRS…NRSLVPTATD (70 aa). Ser-340, Ser-342, and Ser-384 each carry phosphoserine. The span at 360 to 400 shows a compositional bias: polar residues; the sequence is DRSSSPSEHLSPQQDGVDTSCSTGSPGVATANRSLVPTATD.

Belongs to the G-protein coupled receptor 1 family. In terms of tissue distribution, expressed in spleen and brain. In the CNS expression is restricted to oligodendrocytes.

The protein localises to the cell membrane. In terms of biological role, receptor for the lysosphingolipid sphingosine 1-phosphate (S1P). S1P is a bioactive lysophospholipid that elicits diverse physiological effect on most types of cells and tissues. Is coupled to both the G(i/0)alpha and G(12) subclass of heteromeric G-proteins. S1P activation on oligodendroglial cells modulates two distinct functional pathways mediating either process retraction or cell survival. S1P activation on O4-positive pre-oligodendrocytes induces process retraction via a Rho kinase/collapsin response-mediated protein signaling pathway. The S1P-induced survival of mature oligodendrocytes is mediated through a pertussis toxin-sensitive, Akt-dependent pathway. S1P activation on oligodendroglial cells modulates two distinct functional pathways mediating either process retraction or cell survival. These effects depend on the developmental stage of the cell. The protein is Sphingosine 1-phosphate receptor 5 (S1pr5) of Mus musculus (Mouse).